Here is a 185-residue protein sequence, read N- to C-terminus: Photosystem I assembly protein Ycf4 (185 aa).

The next 3 helical transmembrane spans lie at 22-42 (FFFA…GFSS), 57-77 (ILFV…LFFS), and 101-121 (FYVF…LRVP).

The protein belongs to the Ycf4 family.

Its subcellular location is the plastid. It localises to the chloroplast thylakoid membrane. Functionally, seems to be required for the assembly of the photosystem I complex. In Gnetum parvifolium (Small-leaved jointfir), this protein is Photosystem I assembly protein Ycf4.